The chain runs to 201 residues: Chromophore lyase CpcT/CpeT (201 aa).

This sequence belongs to the CpcT/CpeT biliprotein lyase family.

It localises to the plastid. The protein resides in the organellar chromatophore. In terms of biological role, covalently attaches a chromophore to Cys residue(s) of phycobiliproteins. This chain is Chromophore lyase CpcT/CpeT, found in Paulinella chromatophora.